Reading from the N-terminus, the 118-residue chain is Small ribosomal subunit protein uS13 (118 aa).

Residues 93–118 (RGLPVRGQRTKTNARTRKGPRKPIRK) form a disordered region.

It belongs to the universal ribosomal protein uS13 family. In terms of assembly, part of the 30S ribosomal subunit. Forms a loose heterodimer with protein S19. Forms two bridges to the 50S subunit in the 70S ribosome.

Its function is as follows. Located at the top of the head of the 30S subunit, it contacts several helices of the 16S rRNA. In the 70S ribosome it contacts the 23S rRNA (bridge B1a) and protein L5 of the 50S subunit (bridge B1b), connecting the 2 subunits; these bridges are implicated in subunit movement. Contacts the tRNAs in the A and P-sites. The chain is Small ribosomal subunit protein uS13 from Pseudomonas paraeruginosa (strain DSM 24068 / PA7) (Pseudomonas aeruginosa (strain PA7)).